The chain runs to 408 residues: Ribonuclease T2-like (408 aa).

An N-terminal signal peptide occupies residues Met-1 to Phe-25. Disulfide bonds link Cys-38–Cys-56, Cys-45–Cys-92, Cys-55–Cys-158, and Cys-100–Cys-150. The active site involves His-85. A glycan (N-linked (GlcNAc...) asparagine) is linked at Asn-108. Residues Glu-143 and His-147 contribute to the active site. Asn-173 is a glycosylation site (N-linked (GlcNAc...) asparagine). Cysteines 222 and 257 form a disulfide. The disordered stretch occupies residues Lys-268–Arg-292. The segment covering Thr-275–Pro-288 has biased composition (low complexity). Asn-372 carries an N-linked (GlcNAc...) asparagine glycan.

This sequence belongs to the RNase T2 family.

It localises to the vacuole lumen. Its subcellular location is the cytoplasm. The enzyme catalyses a ribonucleotidyl-ribonucleotide-RNA + H2O = a 3'-end 3'-phospho-ribonucleotide-RNA + a 5'-end dephospho-ribonucleoside-RNA + H(+). Rnase which modulates cell survival under stress conditions. Released from the vacuole to the cytoplasm during stress to promote tRNA and rRNA cleavage and to activate separately a downstream pathway that promotes cell death. Involved in cell size, vacuolar morphology and growth at high temperatures and high salt concentration. This Aspergillus fumigatus (strain ATCC MYA-4609 / CBS 101355 / FGSC A1100 / Af293) (Neosartorya fumigata) protein is Ribonuclease T2-like (rny1).